The primary structure comprises 231 residues: Phosphatidylserine decarboxylase proenzyme (231 aa).

S188 serves as the catalytic Schiff-base intermediate with substrate; via pyruvic acid. A Pyruvic acid (Ser); by autocatalysis modification is found at S188.

The protein belongs to the phosphatidylserine decarboxylase family. PSD-A subfamily. Heterodimer of a large membrane-associated beta subunit and a small pyruvoyl-containing alpha subunit. Pyruvate is required as a cofactor. Post-translationally, is synthesized initially as an inactive proenzyme. Formation of the active enzyme involves a self-maturation process in which the active site pyruvoyl group is generated from an internal serine residue via an autocatalytic post-translational modification. Two non-identical subunits are generated from the proenzyme in this reaction, and the pyruvate is formed at the N-terminus of the alpha chain, which is derived from the carboxyl end of the proenzyme. The post-translation cleavage follows an unusual pathway, termed non-hydrolytic serinolysis, in which the side chain hydroxyl group of the serine supplies its oxygen atom to form the C-terminus of the beta chain, while the remainder of the serine residue undergoes an oxidative deamination to produce ammonia and the pyruvoyl prosthetic group on the alpha chain.

It is found in the cell membrane. It catalyses the reaction a 1,2-diacyl-sn-glycero-3-phospho-L-serine + H(+) = a 1,2-diacyl-sn-glycero-3-phosphoethanolamine + CO2. Its pathway is phospholipid metabolism; phosphatidylethanolamine biosynthesis; phosphatidylethanolamine from CDP-diacylglycerol: step 2/2. Catalyzes the formation of phosphatidylethanolamine (PtdEtn) from phosphatidylserine (PtdSer). The polypeptide is Phosphatidylserine decarboxylase proenzyme (Rickettsia rickettsii (strain Iowa)).